Reading from the N-terminus, the 308-residue chain is Protoheme IX farnesyltransferase (308 aa).

The next 9 helical transmembrane spans lie at 31 to 51 (VGIVYSNLITTFTGMWLAFYF), 60 to 80 (LDIVLFTLAGSSLIIAGSCVI), 110 to 130 (ALWFGILLTALGFIMLLMTNL), 131 to 151 (TAAGVGFVGVFTYVFLYTMWS), 157 to 177 (VNTIIGSVSGAVPPLIGWTAV), 185 to 205 (AWVLFLIMFIWQIPHFLALAI), 232 to 252 (IIIWIACLMPLPFFLGGLGLP), 253 to 273 (IVILGTVLNIGWLVCGLVGYR), and 285 to 305 (FVYSLNYLTIFFVAMVVFTLF).

It belongs to the UbiA prenyltransferase family. Protoheme IX farnesyltransferase subfamily. Interacts with CtaA.

The protein resides in the cell membrane. It catalyses the reaction heme b + (2E,6E)-farnesyl diphosphate + H2O = Fe(II)-heme o + diphosphate. The protein operates within porphyrin-containing compound metabolism; heme O biosynthesis; heme O from protoheme: step 1/1. Functionally, converts heme B (protoheme IX) to heme O by substitution of the vinyl group on carbon 2 of heme B porphyrin ring with a hydroxyethyl farnesyl side group. This chain is Protoheme IX farnesyltransferase, found in Bacillus licheniformis (strain ATCC 14580 / DSM 13 / JCM 2505 / CCUG 7422 / NBRC 12200 / NCIMB 9375 / NCTC 10341 / NRRL NRS-1264 / Gibson 46).